Here is a 212-residue protein sequence, read N- to C-terminus: Small ribosomal subunit protein uS5 (212 aa).

Residues 48–111 enclose the S5 DRBM domain; it reads LEDEVLDINM…DIAKLNIIDV (64 aa).

The protein belongs to the universal ribosomal protein uS5 family. As to quaternary structure, part of the 30S ribosomal subunit. Contacts protein S4.

In terms of biological role, with S4 and S12 plays an important role in translational accuracy. The chain is Small ribosomal subunit protein uS5 from Haloarcula marismortui (strain ATCC 43049 / DSM 3752 / JCM 8966 / VKM B-1809) (Halobacterium marismortui).